The primary structure comprises 534 residues: MTLQTEMEAALEVAALNREMLIILDFGSQYSELIARRIRETQVYSEVLSYRTTADQIRQLSPKGIILSGGPNSVYDDYAPVCDPEIWNLGIPVLGVCYGMQLMVQQLGGQVDRAERGEYGKAALVIDDPTDLLTNVEPGSTMWMSHGDSVKTMPEGFELLAHTDNTPCAAIADHQRKFYGVQFHPEVVHSVHGMALIRNFVYHICDCEPTWTTETFVEEAIREIRARVGDKRVLLALSGGVDSSTLAFLLHRAIGDQLTCMFIDQGFMRKGEPERLMEVFNEKFKIHVEYIQARDRFLQRLEGITDPEEKRKRIGHEFIRVFEEESRRLGPFDYLAQGTLYPDVIESADTNVDPKTGERVAVKIKSHHNVGGLPKDLQFKLVEPLRRLFKDEVRQVGRSLGLPEEIVKRHPFPGPGLAIRILGEVTAEKLNILRDADLIVRQEVNRQGYYDEFWQAFAVLLPVKSVGVMGDKRTYAYPVVLRFVSSEDGMTADWSRAPYDLLETISNRIVNEVKGVNRVVYDITSKPPGTIEWE.

Positions 20-210 (MLIILDFGSQ…VYHICDCEPT (191 aa)) constitute a Glutamine amidotransferase type-1 domain. Cysteine 97 (nucleophile) is an active-site residue. Residues histidine 184 and glutamate 186 contribute to the active site. The 199-residue stretch at 211-409 (WTTETFVEEA…LGLPEEIVKR (199 aa)) folds into the GMPS ATP-PPase domain. 238–244 (SGGVDSS) is a binding site for ATP.

Homodimer.

The catalysed reaction is XMP + L-glutamine + ATP + H2O = GMP + L-glutamate + AMP + diphosphate + 2 H(+). It participates in purine metabolism; GMP biosynthesis; GMP from XMP (L-Gln route): step 1/1. In terms of biological role, catalyzes the synthesis of GMP from XMP. This chain is GMP synthase [glutamine-hydrolyzing], found in Synechococcus sp. (strain ATCC 27144 / PCC 6301 / SAUG 1402/1) (Anacystis nidulans).